Here is a 365-residue protein sequence, read N- to C-terminus: tRNA(Met) cytidine acetate ligase (365 aa).

ATP is bound by residues 7–20 (IAEF…HKYL), Gly96, Asn152, and Arg175.

The protein belongs to the TmcAL family.

The protein localises to the cytoplasm. It carries out the reaction cytidine(34) in elongator tRNA(Met) + acetate + ATP = N(4)-acetylcytidine(34) in elongator tRNA(Met) + AMP + diphosphate. Catalyzes the formation of N(4)-acetylcytidine (ac(4)C) at the wobble position of elongator tRNA(Met), using acetate and ATP as substrates. First activates an acetate ion to form acetyladenylate (Ac-AMP) and then transfers the acetyl group to tRNA to form ac(4)C34. This Streptococcus pneumoniae (strain P1031) protein is tRNA(Met) cytidine acetate ligase.